Consider the following 158-residue polypeptide: C-type lectin mannose-binding isoform (158 aa).

Residues 1–20 (MGRFLLVTLSMLVVTFSLNE) form the signal peptide. Cystine bridges form between C26/C37, C54/C154, and C129/C146. One can recognise a C-type lectin domain in the interval 33 to 155 (KNGFCYKVFN…CEALYHFICQ (123 aa)). Positions 119–121 (EPN) match the Mannose-binding motif. N121 is a glycosylation site (N-linked (GlcNAc...) asparagine). The Ca(2+) site is built by E127, N142, and D143.

This sequence belongs to the true venom lectin family. In terms of assembly, homodimer; disulfide-linked. Expressed by the venom gland.

The protein resides in the secreted. In terms of biological role, mannose-binding lectin that binds to and agglutinates erythrocytes in a calcium-dependent manner. This is C-type lectin mannose-binding isoform from Notechis scutatus scutatus (Mainland tiger snake).